The chain runs to 155 residues: Ribosomal RNA large subunit methyltransferase H (155 aa).

S-adenosyl-L-methionine contacts are provided by residues Gly-104 and 123–128 (LGPMTF).

The protein belongs to the RNA methyltransferase RlmH family. As to quaternary structure, homodimer.

Its subcellular location is the cytoplasm. The enzyme catalyses pseudouridine(1915) in 23S rRNA + S-adenosyl-L-methionine = N(3)-methylpseudouridine(1915) in 23S rRNA + S-adenosyl-L-homocysteine + H(+). Functionally, specifically methylates the pseudouridine at position 1915 (m3Psi1915) in 23S rRNA. The polypeptide is Ribosomal RNA large subunit methyltransferase H (Nitratidesulfovibrio vulgaris (strain DSM 19637 / Miyazaki F) (Desulfovibrio vulgaris)).